The chain runs to 115 residues: NADH-ubiquinone oxidoreductase chain 3 (115 aa).

3 helical membrane-spanning segments follow: residues 4–24, 55–75, and 86–106; these read IMVI…AFWL, FFLV…LLPI, and TMML…AYEW.

This sequence belongs to the complex I subunit 3 family. In terms of assembly, core subunit of respiratory chain NADH dehydrogenase (Complex I) which is composed of 45 different subunits. Interacts with TMEM186. Interacts with TMEM242.

It is found in the mitochondrion inner membrane. It catalyses the reaction a ubiquinone + NADH + 5 H(+)(in) = a ubiquinol + NAD(+) + 4 H(+)(out). Core subunit of the mitochondrial membrane respiratory chain NADH dehydrogenase (Complex I) which catalyzes electron transfer from NADH through the respiratory chain, using ubiquinone as an electron acceptor. Essential for the catalytic activity of complex I. This is NADH-ubiquinone oxidoreductase chain 3 from Baiomys taylori (Northern pygmy mouse).